The following is a 407-amino-acid chain: Tyrosine--tRNA ligase (407 aa).

Y36 is an L-tyrosine binding site. Residues 41 to 50 (PTADSLHIGH) carry the 'HIGH' region motif. Y169 and Q173 together coordinate L-tyrosine. Positions 229–233 (KMGKT) match the 'KMSKS' region motif. K232 provides a ligand contact to ATP. The 67-residue stretch at 341–407 (KGILDILVET…KKSYNRIVIE (67 aa)) folds into the S4 RNA-binding domain.

This sequence belongs to the class-I aminoacyl-tRNA synthetase family. TyrS type 1 subfamily. In terms of assembly, homodimer.

The protein resides in the cytoplasm. It carries out the reaction tRNA(Tyr) + L-tyrosine + ATP = L-tyrosyl-tRNA(Tyr) + AMP + diphosphate + H(+). Its function is as follows. Catalyzes the attachment of tyrosine to tRNA(Tyr) in a two-step reaction: tyrosine is first activated by ATP to form Tyr-AMP and then transferred to the acceptor end of tRNA(Tyr). In Clostridium tetani (strain Massachusetts / E88), this protein is Tyrosine--tRNA ligase.